The sequence spans 291 residues: Peptide methionine sulfoxide reductase MsrB/MsrA (291 aa).

The MsrB domain occupies 1 to 124 (MLANLQHLSD…NSAALRFVAR (124 aa)). Residue Cys-113 is the Nucleophile of the active site. Residues 127–284 (GTALFAAGCF…PGGYCHVSLH (158 aa)) form a peptide methionine sulfoxide reductase A region. Cys-135 is an active-site residue.

This sequence in the N-terminal section; belongs to the MsrB Met sulfoxide reductase family. In the C-terminal section; belongs to the MsrA Met sulfoxide reductase family.

It carries out the reaction L-methionyl-[protein] + [thioredoxin]-disulfide + H2O = L-methionyl-(R)-S-oxide-[protein] + [thioredoxin]-dithiol. It catalyses the reaction L-methionyl-[protein] + [thioredoxin]-disulfide + H2O = L-methionyl-(S)-S-oxide-[protein] + [thioredoxin]-dithiol. The enzyme catalyses [thioredoxin]-disulfide + L-methionine + H2O = L-methionine (S)-S-oxide + [thioredoxin]-dithiol. Has an important function as a repair enzyme for proteins that have been inactivated by oxidation. Catalyzes the reversible oxidation-reduction of methionine sulfoxide in proteins to methionine. The protein is Peptide methionine sulfoxide reductase MsrB/MsrA (msrAB) of Treponema pallidum (strain Nichols).